A 375-amino-acid polypeptide reads, in one-letter code: Growth/differentiation factor 8 (375 aa).

The first 18 residues, 1–18 (MQKLQISVYIYLFMLIVA), serve as a signal peptide directing secretion. A propeptide spanning residues 19–266 (GPVDLNENSE…VTDTPKRSRR (248 aa)) is cleaved from the precursor. N-linked (GlcNAc...) asparagine glycans are attached at residues Asn-47 and Asn-71. 4 disulfides stabilise this stretch: Cys-272/Cys-282, Cys-281/Cys-340, Cys-309/Cys-372, and Cys-313/Cys-374.

The protein belongs to the TGF-beta family. In terms of assembly, homodimer; disulfide-linked. Interacts with WFIKKN2, leading to inhibit its activity. Interacts with FSTL3. Post-translationally, synthesized as large precursor molecule that undergoes proteolytic cleavage to generate an N-terminal propeptide and a disulfide linked C-terminal dimer, which is the biologically active molecule. The circulating form consists of a latent complex of the C-terminal dimer and other proteins, including its propeptide, which maintain the C-terminal dimer in a latent, inactive state. Ligand activation requires additional cleavage of the prodomain by a tolloid-like metalloproteinase.

It localises to the secreted. Functionally, acts specifically as a negative regulator of skeletal muscle growth. In Bubalus bubalis (Domestic water buffalo), this protein is Growth/differentiation factor 8 (MSTN).